The primary structure comprises 155 residues: MSENTIYSGLKQLGSHTDIPLTPEEAVLERVANPQEGTPYCVRFTAPEFTSLCPMTGQPDFAHLVIDYVPGKWLVESKSLKLFLFSFRNHGAFHEDCTVTIGKRLVDLLEPEWLRIGGYWYPRGGIPIDVFYQTGAAPLNVWIPEQGVANYRGRG.

The active-site Thioimide intermediate is cysteine 53. Catalysis depends on aspartate 60, which acts as the Proton donor. Substrate-binding positions include 75–77 and 94–95; these read VES and HE.

The protein belongs to the GTP cyclohydrolase I family. QueF type 1 subfamily.

It localises to the cytoplasm. The catalysed reaction is 7-aminomethyl-7-carbaguanine + 2 NADP(+) = 7-cyano-7-deazaguanine + 2 NADPH + 3 H(+). The protein operates within tRNA modification; tRNA-queuosine biosynthesis. Functionally, catalyzes the NADPH-dependent reduction of 7-cyano-7-deazaguanine (preQ0) to 7-aminomethyl-7-deazaguanine (preQ1). The sequence is that of NADPH-dependent 7-cyano-7-deazaguanine reductase from Brucella suis (strain ATCC 23445 / NCTC 10510).